A 612-amino-acid polypeptide reads, in one-letter code: Dihydroxy-acid dehydratase (612 aa).

Residue aspartate 81 coordinates Mg(2+). Cysteine 122 contributes to the [2Fe-2S] cluster binding site. Residues aspartate 123 and lysine 124 each coordinate Mg(2+). Lysine 124 is subject to N6-carboxylysine. Cysteine 193 lines the [2Fe-2S] cluster pocket. Glutamate 489 contributes to the Mg(2+) binding site. Serine 515 (proton acceptor) is an active-site residue.

Belongs to the IlvD/Edd family. In terms of assembly, homodimer. [2Fe-2S] cluster serves as cofactor. It depends on Mg(2+) as a cofactor.

The catalysed reaction is (2R)-2,3-dihydroxy-3-methylbutanoate = 3-methyl-2-oxobutanoate + H2O. The enzyme catalyses (2R,3R)-2,3-dihydroxy-3-methylpentanoate = (S)-3-methyl-2-oxopentanoate + H2O. It functions in the pathway amino-acid biosynthesis; L-isoleucine biosynthesis; L-isoleucine from 2-oxobutanoate: step 3/4. Its pathway is amino-acid biosynthesis; L-valine biosynthesis; L-valine from pyruvate: step 3/4. In terms of biological role, functions in the biosynthesis of branched-chain amino acids. Catalyzes the dehydration of (2R,3R)-2,3-dihydroxy-3-methylpentanoate (2,3-dihydroxy-3-methylvalerate) into 2-oxo-3-methylpentanoate (2-oxo-3-methylvalerate) and of (2R)-2,3-dihydroxy-3-methylbutanoate (2,3-dihydroxyisovalerate) into 2-oxo-3-methylbutanoate (2-oxoisovalerate), the penultimate precursor to L-isoleucine and L-valine, respectively. The sequence is that of Dihydroxy-acid dehydratase from Azotobacter vinelandii (strain DJ / ATCC BAA-1303).